The chain runs to 150 residues: Catabolic 3-dehydroquinase 2 (150 aa).

Tyr23 serves as the catalytic Proton acceptor. Positions 74, 80, and 87 each coordinate substrate. The active-site Proton donor is His100. Residues 101–102 and Arg111 each bind substrate; that span reads IT.

This sequence belongs to the type-II 3-dehydroquinase family. As to quaternary structure, homododecamer. Adopts a ring-like structure, composed of an arrangement of two hexameric rings stacked on top of one another.

It catalyses the reaction 3-dehydroquinate = 3-dehydroshikimate + H2O. The protein operates within aromatic compound metabolism; 3,4-dihydroxybenzoate biosynthesis; 3,4-dihydroxybenzoate from 3-dehydroquinate: step 1/2. Is involved in the catabolism of quinate. Allows the utilization of quinate as carbon source via the beta-ketoadipate pathway. In Aspergillus flavus (strain ATCC 200026 / FGSC A1120 / IAM 13836 / NRRL 3357 / JCM 12722 / SRRC 167), this protein is Catabolic 3-dehydroquinase 2.